The following is a 342-amino-acid chain: Anthranilate phosphoribosyltransferase (342 aa).

5-phospho-alpha-D-ribose 1-diphosphate is bound by residues glycine 84, glycine 87–aspartate 88, threonine 92, asparagine 94–threonine 97, lysine 112–serine 120, and serine 124. Glycine 84 is an anthranilate binding site. Position 96 (threonine 96) interacts with Mg(2+). Asparagine 115 serves as a coordination point for anthranilate. Arginine 170 contacts anthranilate. Mg(2+)-binding residues include aspartate 228 and glutamate 229.

It belongs to the anthranilate phosphoribosyltransferase family. Homodimer. Requires Mg(2+) as cofactor.

It catalyses the reaction N-(5-phospho-beta-D-ribosyl)anthranilate + diphosphate = 5-phospho-alpha-D-ribose 1-diphosphate + anthranilate. The protein operates within amino-acid biosynthesis; L-tryptophan biosynthesis; L-tryptophan from chorismate: step 2/5. In terms of biological role, catalyzes the transfer of the phosphoribosyl group of 5-phosphorylribose-1-pyrophosphate (PRPP) to anthranilate to yield N-(5'-phosphoribosyl)-anthranilate (PRA). The protein is Anthranilate phosphoribosyltransferase of Corynebacterium efficiens (strain DSM 44549 / YS-314 / AJ 12310 / JCM 11189 / NBRC 100395).